The following is a 121-amino-acid chain: Holin-like protein CidA (121 aa).

4 helical membrane-spanning segments follow: residues 3–23 (WWKL…GEWI), 30–50 (PVPG…FNLV), 58–78 (GADF…VAVI), and 89–109 (IDLI…TGLL).

It belongs to the CidA/LrgA family. CidA subfamily.

The protein localises to the cell membrane. In terms of biological role, increases the activity of extracellular murein hydrolases possibly by mediating their export via hole formation. Inhibited by the antiholin-like proteins LrgAB. In an unstressed cell, the LrgAB products probably inhibit the function of the CidA protein. When a cell is stressed by the addition of antibiotics or by other factors in the environment, CidA possibly oligomerizes within the bacterial cell membrane, creating lesions that disrupt the proton motive force, which in turn results in loss of cell viability. These lesions are also hypothesized to regulate the subsequent cell lysis by either allowing the murein hydrolases access to the cell wall substrate and/or regulating their activity by a possible change in the cell wall pH that results from loss of membrane potential. The sequence is that of Holin-like protein CidA from Bacillus cereus (strain ATCC 10987 / NRS 248).